The chain runs to 57 residues: uncharacterized protein (57 aa).

This is an uncharacterized protein from Saccharomyces cerevisiae (strain ATCC 204508 / S288c) (Baker's yeast).